The following is an 875-amino-acid chain: MLSNTLRSNFLKFYANRNHTPVASSPVFPHNDPSILFTNAGMNQFKNIFLGKEQTSYTRATTSQKCIRAGGKHNDLENVGHTSRHLTFFEMLGNFSFGDYFKQDAISFAWEVSLSVFNFDPDFIYATVHEKDDEAFALWEKYLPTDRIFRLTDKDNFWSMADTGPCGFCSELLFDRGEKFGKAASPLEDVDGERFLEYWNLVFMEFNRTSDGTLLALQKKCVDTGAGLERLVSLLAETKTVFEADVLRHLISKIENLSGTTYSPTEAKGAAFRVIADHIRSLSFAIADGLLPGNTERGYVLRKILRRAVNYGKRLGFNRPFLADVVPSLVDVMGEAYPELSASVTQIQEVLTTEEEHFFKTLQRGGNLLQQVLKSSASSAKISGEDAFKLKDTYGLPIDEIALLAKDYNYAIDMDTFEKLEVEAKERSRKNTKKTKNDSDSVFQDLDPTNTSEFIGYDTLSCDTFIEGIIKYNEIASSLEEGDEGAIILRTTPFYAEKGGQIGDSGEIFCESGTFLVSHTIAPKAGLIVHLGKLSQGSLTTTMAVTAQVNQNLRKKTANNHTGCHLLHKALEMTLGEHIRQAGSYVDSQKIRLDFTHNKALSPEDLLAIETLVNEKIRENDPVTIREVLYSDVMSSSEIKQFCGDKYGDIVRVVLAGFSHELCGGTHAQATGDIGYFRITKEHAVATGIRRIEATTGEDAENIARGQDVDLNEIATVIQSPKDQILVKIRSVMEEKKDLAKQVADLENQLVQQQVKTLLTSCEKICDTSYLVYYLTEEEGQRIQHYANAIHKEIPTNFISLWITEKNGRYIVLSRVSDDLTKRGVQAHTLLAELLAPYGGRCGGKAISAQGSSAELPQIEFLNKTLRQWISTQLA.

Zn(2+) is bound by residues His-561, His-565, Cys-663, and His-667.

This sequence belongs to the class-II aminoacyl-tRNA synthetase family. Zn(2+) is required as a cofactor.

It localises to the cytoplasm. The catalysed reaction is tRNA(Ala) + L-alanine + ATP = L-alanyl-tRNA(Ala) + AMP + diphosphate. In terms of biological role, catalyzes the attachment of alanine to tRNA(Ala) in a two-step reaction: alanine is first activated by ATP to form Ala-AMP and then transferred to the acceptor end of tRNA(Ala). Also edits incorrectly charged Ser-tRNA(Ala) and Gly-tRNA(Ala) via its editing domain. The polypeptide is Alanine--tRNA ligase (Chlamydia trachomatis serovar L2 (strain ATCC VR-902B / DSM 19102 / 434/Bu)).